Reading from the N-terminus, the 113-residue chain is Hemerythrin (113 aa).

Residues H25, H54, E58, H73, H77, H101, and D106 each contribute to the Fe cation site.

The protein belongs to the hemerythrin family. Homotrimer.

Functionally, hemerythrin is a respiratory protein in blood cells of certain marine worms. The oxygen-binding site in each chain contains two iron atoms. This Siphonosoma cumanense (Sipunculan worm) protein is Hemerythrin.